Consider the following 121-residue polypeptide: NAD(P)H-quinone oxidoreductase subunit M (121 aa).

The protein belongs to the complex I NdhM subunit family. In terms of assembly, NDH-1 can be composed of about 15 different subunits; different subcomplexes with different compositions have been identified which probably have different functions.

Its subcellular location is the cellular thylakoid membrane. It carries out the reaction a plastoquinone + NADH + (n+1) H(+)(in) = a plastoquinol + NAD(+) + n H(+)(out). The enzyme catalyses a plastoquinone + NADPH + (n+1) H(+)(in) = a plastoquinol + NADP(+) + n H(+)(out). Functionally, NDH-1 shuttles electrons from an unknown electron donor, via FMN and iron-sulfur (Fe-S) centers, to quinones in the respiratory and/or the photosynthetic chain. The immediate electron acceptor for the enzyme in this species is believed to be plastoquinone. Couples the redox reaction to proton translocation, and thus conserves the redox energy in a proton gradient. Cyanobacterial NDH-1 also plays a role in inorganic carbon-concentration. The protein is NAD(P)H-quinone oxidoreductase subunit M of Synechococcus sp. (strain JA-2-3B'a(2-13)) (Cyanobacteria bacterium Yellowstone B-Prime).